The chain runs to 238 residues: Chromosome partition protein MukE (238 aa).

Belongs to the MukE family. Interacts, and probably forms a ternary complex, with MukF and MukB. The complex formation is stimulated by calcium or magnesium.

The protein localises to the cytoplasm. It is found in the nucleoid. Involved in chromosome condensation, segregation and cell cycle progression. May participate in facilitating chromosome segregation by condensation DNA from both sides of a centrally located replisome during cell division. Probably acts via its interaction with MukB and MukF. This is Chromosome partition protein MukE from Haemophilus ducreyi (strain 35000HP / ATCC 700724).